Reading from the N-terminus, the 149-residue chain is MAAAALRDQLTALLSSMFSQGLVDEQFQQLQMLQDEGGTPGFVSEVVTLFCDDADRIINEIATLLEQPVVNFDKVDAYVHQLKGSSASVGAQKVKFTCMQFRQFCQDKSRDGCLMALAVVRNDFYDLRNKFQTMLQLEQQIQAYDPKQQ.

Positions threonine 39–tyrosine 144 constitute an HPt domain. Phosphohistidine is present on histidine 80.

Two-component system major event consists of a His-to-Asp phosphorelay between a sensor histidine kinase (HK) and a response regulator (RR). In plants, the His-to-Asp phosphorelay involves an additional intermediate named Histidine-containing phosphotransfer protein (HPt). This multistep phosphorelay consists of a His-Asp-His-Asp sequential transfer of a phosphate group between first a His and an Asp of the HK protein, followed by the transfer to a conserved His of the HPt protein and finally the transfer to an Asp in the receiver domain of the RR protein. As to expression, widely expressed.

The protein localises to the cytoplasm. It is found in the cytosol. Its subcellular location is the nucleus. Functionally, functions as a two-component phosphorelay mediators between cytokinin sensor histidine kinases and response regulators (B-type ARRs). Plays an important role in propagating cytokinin signal transduction through the multistep His-to-Asp phosphorelay. Functions as a positive regulator of the cytokinin signaling pathway. May play a regulatory role in salt and drought tolerance during plant development. The polypeptide is Histidine-containing phosphotransfer protein 2 (Oryza sativa subsp. japonica (Rice)).